The chain runs to 427 residues: Homogentisate 1,2-dioxygenase (427 aa).

The active-site Proton acceptor is His285. Residues His328 and Glu334 each contribute to the Fe cation site. The homogentisate site is built by Tyr343 and His364. Position 364 (His364) interacts with Fe cation.

Belongs to the homogentisate dioxygenase family. As to quaternary structure, hexamer; dimer of trimers. Requires Fe cation as cofactor.

The enzyme catalyses homogentisate + O2 = 4-maleylacetoacetate + H(+). It participates in amino-acid degradation; L-phenylalanine degradation; acetoacetate and fumarate from L-phenylalanine: step 4/6. Its function is as follows. Involved in the catabolism of homogentisate (2,5-dihydroxyphenylacetate or 2,5-OH-PhAc), a central intermediate in the degradation of phenylalanine and tyrosine. Catalyzes the oxidative ring cleavage of the aromatic ring of homogentisate to yield maleylacetoacetate. The protein is Homogentisate 1,2-dioxygenase of Caulobacter sp. (strain K31).